Consider the following 163-residue polypeptide: MYCPFCRHPDSRVVDSRVSDDGSSIRRRRQCPQCERRFTTVETTSLTVIKRSGIGEPFSRGKVINGVRKACQGRPVSEDDLAVLAQEVEENIRASGAAEIEAHEVGLAILGPLQKLDKIAYLRFASVYQAFESLDDFEHAIEILRHEADLDGSAESAKKQVRP.

The segment at 3 to 34 (CPFCRHPDSRVVDSRVSDDGSSIRRRRQCPQC) is a zinc-finger region. Residues 46–136 (LTVIKRSGIG…VYQAFESLDD (91 aa)) enclose the ATP-cone domain.

The protein belongs to the NrdR family. Requires Zn(2+) as cofactor.

Its function is as follows. Negatively regulates transcription of bacterial ribonucleotide reductase nrd genes and operons by binding to NrdR-boxes. In Renibacterium salmoninarum (strain ATCC 33209 / DSM 20767 / JCM 11484 / NBRC 15589 / NCIMB 2235), this protein is Transcriptional repressor NrdR.